Here is a 1240-residue protein sequence, read N- to C-terminus: Cohesin subunit SA-3 (1240 aa).

Low complexity predominate over residues 1–25; it reads MPTLWSPSTQHHGSSSGSESSPLQK. Positions 1-108 are disordered; the sequence is MPTLWSPSTQ…VSSGNGKNES (108 aa). A compositionally biased stretch (polar residues) spans 97 to 108; the sequence is RIVSSGNGKNES. The region spanning 324–409 is the SCD domain; that stretch reads FVHRYRDILP…NRFKDRMVSM (86 aa). 2 disordered regions span residues 1077–1154 and 1213–1240; these read AEAS…PELI and DKML…MEDF. The span at 1115–1125 shows a compositional bias: polar residues; the sequence is GPTTPTLTSTA. Residues 1126 to 1141 show a composition bias toward basic residues; that stretch reads VKRKQSLRTVGKKQKG. Position 1218 is a phosphoserine (Ser-1218).

Belongs to the SCC3 family. Component of the meiosis-specific cohesin complex, which also contains the SMC1 (SMC1A or SMC1B) and SMC3 heterodimer. Such complex likely contains RAD21, or the meiosis-specific related protein REC8. Interacts with CCDC79/TERB1; recruiting cohesin to telomeres to develop structural rigidity. Post-translationally, phosphorylated. Testis specific.

Its subcellular location is the nucleus. It localises to the chromosome. The protein resides in the centromere. Functionally, meiosis specific component of cohesin complex. The cohesin complex is required for the cohesion of sister chromatids after DNA replication. The cohesin complex apparently forms a large proteinaceous ring within which sister chromatids can be trapped. At anaphase, the complex is cleaved and dissociates from chromatin, allowing sister chromatids to segregate. The meiosis-specific cohesin complex probably replaces mitosis specific cohesin complex when it dissociates from chromatin during prophase I. This is Cohesin subunit SA-3 (Stag3) from Mus musculus (Mouse).